The following is an 83-amino-acid chain: Alpha-toxin CvIV4 (83 aa).

Residues 1–19 (MNYFILILVAALLILDVNC) form the signal peptide. The 59-residue stretch at 21 to 79 (KDGYPVEHSGCKYTCWKNEYCDKVCKDLKGEGGYCYINLTCWCTGLPDNVPLKTNQRCN) folds into the LCN-type CS-alpha/beta domain. 4 cysteine pairs are disulfide-bonded: Cys-31–Cys-78, Cys-35–Cys-55, Cys-41–Cys-61, and Cys-45–Cys-63.

Belongs to the long (4 C-C) scorpion toxin superfamily. Sodium channel inhibitor family. Expressed by the venom gland.

The protein resides in the secreted. In terms of biological role, this toxin significantly slows the fast inactivation of Nav1.2/SCN2A (EC(50)=580 nM), Nav1.3/SCN3A (EC(50)=1310 nM), Nav1.4/SCN4A (EC(50)=530 nM), and Nav1.7/SCN9A (EC(50)=1340 nM). The toxin does not affect the peak amplitude of Nav1.7 currents. On all channels cited above, the toxin requires depolarizing potentials to slow channel inactivation. In addition, the toxin has no or very weak effects on the voltage-dependence of steady-state inactivation, and on voltage-dependence of activation. In vivo, it produces paw licking in mice equivalent to the effects of whole venom. The polypeptide is Alpha-toxin CvIV4 (Centruroides vittatus (Striped bark scorpion)).